A 391-amino-acid polypeptide reads, in one-letter code: Alkanesulfonate monooxygenase (391 aa).

This sequence belongs to the SsuD family.

It catalyses the reaction an alkanesulfonate + FMNH2 + O2 = an aldehyde + FMN + sulfite + H2O + 2 H(+). Functionally, catalyzes the desulfonation of aliphatic sulfonates. This Rhodopseudomonas palustris (strain TIE-1) protein is Alkanesulfonate monooxygenase.